The primary structure comprises 196 residues: Peptide methionine sulfoxide reductase MsrA 2 (196 aa).

The active site involves Cys36.

The protein belongs to the MsrA Met sulfoxide reductase family.

It carries out the reaction L-methionyl-[protein] + [thioredoxin]-disulfide + H2O = L-methionyl-(S)-S-oxide-[protein] + [thioredoxin]-dithiol. The enzyme catalyses [thioredoxin]-disulfide + L-methionine + H2O = L-methionine (S)-S-oxide + [thioredoxin]-dithiol. Its function is as follows. Has an important function as a repair enzyme for proteins that have been inactivated by oxidation. Catalyzes the reversible oxidation-reduction of methionine sulfoxide in proteins to methionine. In Caulobacter vibrioides (strain ATCC 19089 / CIP 103742 / CB 15) (Caulobacter crescentus), this protein is Peptide methionine sulfoxide reductase MsrA 2 (msrA2).